The following is a 601-amino-acid chain: NADH-quinone oxidoreductase subunit C/D (601 aa).

Positions 1–192 (MIVPDLVADA…PPYSLTEDQE (192 aa)) are NADH dehydrogenase I subunit C. The tract at residues 216–601 (DFMFLNLGPN…IDFVMADVDR (386 aa)) is NADH dehydrogenase I subunit D.

The protein in the N-terminal section; belongs to the complex I 30 kDa subunit family. In the C-terminal section; belongs to the complex I 49 kDa subunit family. In terms of assembly, NDH-1 is composed of 13 different subunits. Subunits NuoB, CD, E, F, and G constitute the peripheral sector of the complex.

It localises to the cell inner membrane. The catalysed reaction is a quinone + NADH + 5 H(+)(in) = a quinol + NAD(+) + 4 H(+)(out). Its function is as follows. NDH-1 shuttles electrons from NADH, via FMN and iron-sulfur (Fe-S) centers, to quinones in the respiratory chain. The immediate electron acceptor for the enzyme in this species is believed to be ubiquinone. Couples the redox reaction to proton translocation (for every two electrons transferred, four hydrogen ions are translocated across the cytoplasmic membrane), and thus conserves the redox energy in a proton gradient. The chain is NADH-quinone oxidoreductase subunit C/D from Gluconacetobacter diazotrophicus (strain ATCC 49037 / DSM 5601 / CCUG 37298 / CIP 103539 / LMG 7603 / PAl5).